Consider the following 559-residue polypeptide: Proton-coupled zinc antiporter SLC30A9, mitochondrial (559 aa).

The disordered stretch occupies residues serine 58–proline 96. Transmembrane regions (helical) follow at residues valine 230–valine 250, glycine 305–leucine 325, leucine 333–valine 353, alanine 389–glycine 409, and serine 415–threonine 435. The LXXLL motif motif lies at leucine 453–leucine 457.

This sequence belongs to the cation diffusion facilitator (CDF) transporter (TC 2.A.4) family. SLC30A subfamily.

The protein localises to the mitochondrion membrane. The protein resides in the nucleus. It localises to the endoplasmic reticulum. It carries out the reaction Zn(2+)(in) + 2 H(+)(out) = Zn(2+)(out) + 2 H(+)(in). Its function is as follows. Mitochondrial proton-coupled zinc ion antiporter mediating the export of zinc from the mitochondria and involved in zinc homeostasis, zinc mobilization as well as mitochondrial morphology and health. In nucleus, may function as a secondary coactivator for nuclear receptors. This Xenopus laevis (African clawed frog) protein is Proton-coupled zinc antiporter SLC30A9, mitochondrial (slc30a9).